The sequence spans 44 residues: Photosystem I reaction center subunit IX (44 aa).

The chain crosses the membrane as a helical span at residues 7-27 (YLSVAPVLSTLWFGSLAGLLI).

The protein belongs to the PsaJ family.

The protein resides in the plastid. It is found in the chloroplast thylakoid membrane. Functionally, may help in the organization of the PsaE and PsaF subunits. The chain is Photosystem I reaction center subunit IX from Arabis hirsuta (Hairy rock-cress).